The chain runs to 263 residues: NADH dehydrogenase [ubiquinone] iron-sulfur protein 3, mitochondrial (263 aa).

A mitochondrion-targeting transit peptide spans 1–35 (MAAAAARVWCRGLLGAASVGRGAGRPSVLWQHVRR).

It belongs to the complex I 30 kDa subunit family. Core subunit of respiratory chain NADH dehydrogenase (Complex I) which is composed of 45 different subunits. Interacts with NDUFAF3. Interacts with RAB5IF. Found in subcomplexes containing subunits NDUFS2, MT-ND1 and NDUFA13.

The protein resides in the mitochondrion inner membrane. The catalysed reaction is a ubiquinone + NADH + 5 H(+)(in) = a ubiquinol + NAD(+) + 4 H(+)(out). Core subunit of the mitochondrial membrane respiratory chain NADH dehydrogenase (Complex I) which catalyzes electron transfer from NADH through the respiratory chain, using ubiquinone as an electron acceptor. Essential for the catalytic activity and assembly of complex I. This chain is NADH dehydrogenase [ubiquinone] iron-sulfur protein 3, mitochondrial (Ndufs3), found in Mus musculus (Mouse).